The sequence spans 107 residues: Universal stress protein B homolog (107 aa).

The next 2 helical transmembrane spans lie at 6–26 (IILF…LTAL) and 86–106 (VREL…AAFL).

The protein belongs to the universal stress protein B family.

It is found in the cell inner membrane. The sequence is that of Universal stress protein B homolog from Vibrio vulnificus (strain CMCP6).